A 284-amino-acid polypeptide reads, in one-letter code: MNAPPALLRSVLFAPGNRADLIAKLPRSAPDAVVIDLEDAVPGTAEAKAAARPVAHDAARDLIAAAPHLAVFVRVNALHSPYFEDDLSVLTPELSGVVVPKLEMGAEARQVAQMLQERSLPLPILAGLETGAGVWNAREIMEVPEVAWAYFGAEDYTTDLGGKRTPGGLEVLYARSQVALAARLTGVAALDIVVTALNDPETFRADAEQGRALGYSGKLCIHPAQVALAHEYFGPTEADRARARALLDAAAAAAQRGHGAFSFEGQMVDEPMLAKARTLLSHEA.

2 residues coordinate substrate: Arg-74 and Glu-129. The Mg(2+) site is built by Glu-129 and Asp-155.

The protein belongs to the HpcH/HpaI aldolase family. Citrate lyase beta subunit-like subfamily. In terms of assembly, homotrimer. Mg(2+) is required as a cofactor.

May play a role in fatty acid biosynthesis. This Deinococcus radiodurans (strain ATCC 13939 / DSM 20539 / JCM 16871 / CCUG 27074 / LMG 4051 / NBRC 15346 / NCIMB 9279 / VKM B-1422 / R1) protein is Citrate lyase subunit beta-like protein.